The sequence spans 434 residues: Nuclear envelope integral membrane protein 1b (434 aa).

Positions 1–29 are cleaved as a signal peptide; the sequence is MAGEVEGRGCGFSLGVLVTLLVLPLPSLC. A run of 5 helical transmembrane segments spans residues 151 to 171, 175 to 195, 206 to 226, 239 to 259, and 280 to 300; these read PRLF…DTLS, LFFY…ILVF, PFFA…QLVF, YLIV…YIYG, and LLMY…VIAF. Residues 176–287 are a; required for its colocalization with lamins at the nuclear envelope; the sequence is FFYSTGITVG…GLLLMYVSVQ (112 aa). Positions 317–325 match the Nuclear localization signal motif; that stretch reads RKIKLKRAK. Residues 326 to 395 are b; interaction with ran; sequence PGPPRLLTEE…LTPNEVSVHE (70 aa). The tract at residues 326 to 434 is interaction with banf1-a and banf1-b; that stretch reads PGPPRLLTEE…PLYPIPRSVF (109 aa). The interval 368 to 375 is BAF-binding site (BBS); essential for interaction with banf1-a, banf1-b and ran; it reads SRIQSPKR.

Belongs to the NEMP family. In terms of assembly, interacts with banf1-a and banf1-b. Interacts with ran-gtp. Phosphorylated.

Its subcellular location is the nucleus inner membrane. It is found in the nucleus envelope. Its function is as follows. In concert with ran, required for proper eye development. May be involved in the expression of early eye marker genes. Contributes to nuclear envelope stiffness in germ cells. Required for fertility. Essential for normal erythropoiesis. Required for efficient nuclear envelope opening and enucleation during the late stages of erythroblast maturation. This is Nuclear envelope integral membrane protein 1b (nemp1b) from Xenopus laevis (African clawed frog).